The chain runs to 475 residues: MVNKTSTNNNKEPRRMKKHYLKSNASNLKKTLHKIKVRGFEKLPVSVLSGFLGSGKTTLLNYILNSNHGLKIAVIVNDMSEVNIDSKLILENEFKITRTKATEKQVEAVVEMSNGCICCTMREDLLVEVTKLAKEKRFDYLIIESSGISEPLPIAETFTFEIDGSIENLKDYTKLDTMVTVVDCSTWLEQYQSGESLKDKDMQATDQDERSLVDLLLDQVEFSNVILLNKCDLVSEERVKTIEGLIKHINPEARLLRSTNSVVPLKEILNTGLFDFKKASEHPGWLKELRGTHVPETIEYGIKSFIYKARRPFNSERLSNVIEKGSAVFGGVLRSKGFSWIASTPELIGMWNLAGVQMTILNYGYWLADLKPHEYPNLDLQKEIKKNWSEPFGDRRQELVFIGGNTMNQSLIESELNNCLLTDAELLLGKDIWRTWIDPIQLDEELEEEELEEEEEEGEYKDEIEMKVDGSKFKK.

Position 50–57 (50–57 (GFLGSGKT)) interacts with GTP. 3 residues coordinate Zn(2+): cysteine 116, cysteine 118, and cysteine 119. Positions 116-119 (CICC) match the CXCC motif motif. GTP-binding positions include 119 to 123 (CTMRE) and 229 to 232 (NKCD). One can recognise a CobW C-terminal domain in the interval 302–420 (IKSFIYKARR…LIESELNNCL (119 aa)). Positions 440 to 467 (IQLDEELEEEELEEEEEEGEYKDEIEMK) form a coiled coil. Residues 445–460 (ELEEEELEEEEEEGEY) show a composition bias toward acidic residues. A disordered region spans residues 445-475 (ELEEEELEEEEEEGEYKDEIEMKVDGSKFKK). A compositionally biased stretch (basic and acidic residues) spans 461 to 475 (KDEIEMKVDGSKFKK).

The protein belongs to the SIMIBI class G3E GTPase family. ZNG1 subfamily.

It catalyses the reaction GTP + H2O = GDP + phosphate + H(+). Functionally, zinc chaperone that directly transfers zinc cofactor to target metalloproteins, thereby activating them. Zinc is transferred from the CXCC motif in the GTPase domain to the zinc binding site in target proteins in a process requiring GTP hydrolysis. The protein is Zinc-regulated GTPase metalloprotein activator 1 of Dictyostelium discoideum (Social amoeba).